A 372-amino-acid polypeptide reads, in one-letter code: Glutamate 5-kinase (372 aa).

Lys14 serves as a coordination point for ATP. Positions 54, 141, and 153 each coordinate substrate. Residue 173-174 participates in ATP binding; the sequence is TD. Residues 280–358 enclose the PUA domain; the sequence is RGHVVIDAGA…GEIETVLGYM (79 aa).

This sequence belongs to the glutamate 5-kinase family.

The protein localises to the cytoplasm. The enzyme catalyses L-glutamate + ATP = L-glutamyl 5-phosphate + ADP. Its pathway is amino-acid biosynthesis; L-proline biosynthesis; L-glutamate 5-semialdehyde from L-glutamate: step 1/2. Its function is as follows. Catalyzes the transfer of a phosphate group to glutamate to form L-glutamate 5-phosphate. The chain is Glutamate 5-kinase from Burkholderia ambifaria (strain ATCC BAA-244 / DSM 16087 / CCUG 44356 / LMG 19182 / AMMD) (Burkholderia cepacia (strain AMMD)).